Consider the following 379-residue polypeptide: S-adenosylmethionine decarboxylase proenzyme (379 aa).

Catalysis depends on residues Glu-30 and Glu-33. Ser-96 functions as the Schiff-base intermediate with substrate; via pyruvic acid in the catalytic mechanism. Ser-96 is subject to Pyruvic acid (Ser); by autocatalysis. The active-site Proton donor; for catalytic activity is the Cys-110. Active-site proton acceptor; for processing activity residues include Ser-254 and His-267.

Belongs to the eukaryotic AdoMetDC family. In terms of assembly, heterotetramer of two alpha and two beta chains. Pyruvate is required as a cofactor. Is synthesized initially as an inactive proenzyme. Formation of the active enzyme involves a self-maturation process in which the active site pyruvoyl group is generated from an internal serine residue via an autocatalytic post-translational modification. Two non-identical subunits are generated from the proenzyme in this reaction, and the pyruvate is formed at the N-terminus of the alpha chain, which is derived from the carboxyl end of the proenzyme. The post-translation cleavage follows an unusual pathway, termed non-hydrolytic serinolysis, in which the side chain hydroxyl group of the serine supplies its oxygen atom to form the C-terminus of the beta chain, while the remainder of the serine residue undergoes an oxidative deamination to produce ammonia and the pyruvoyl group blocking the N-terminus of the alpha chain.

The catalysed reaction is S-adenosyl-L-methionine + H(+) = S-adenosyl 3-(methylsulfanyl)propylamine + CO2. The protein operates within amine and polyamine biosynthesis; S-adenosylmethioninamine biosynthesis; S-adenosylmethioninamine from S-adenosyl-L-methionine: step 1/1. In terms of biological role, S-adenosylmethionine decarboxylase is essential for the biosynthesis of spermine and spermidine. The alpha subunit contains the active site. The protein is S-adenosylmethionine decarboxylase proenzyme (amd1) of Dictyostelium discoideum (Social amoeba).